The following is a 500-amino-acid chain: Probable malate:quinone oxidoreductase (500 aa).

Belongs to the MQO family. FAD serves as cofactor.

The enzyme catalyses (S)-malate + a quinone = a quinol + oxaloacetate. Its pathway is carbohydrate metabolism; tricarboxylic acid cycle; oxaloacetate from (S)-malate (quinone route): step 1/1. In Prochlorococcus marinus (strain MIT 9211), this protein is Probable malate:quinone oxidoreductase.